Here is a 368-residue protein sequence, read N- to C-terminus: MEKKKLDLSQYAVRTDLAVEARDLAEEKEASPKKELKGFTVKEYEKDGIKIQTMDIDEEGAKLSGKKAGRYLTFETQGIRQQDSVLQEKVVDVFAKEFSSFLDYLGIPRDASCLIVGLGNWNVTPDSLGPLVTENLLVTRHLFQLQPENVEEGYRPVSALSPGVMGLTGIETSDIIQGVIDRSKPDFVIAIDALASRGIERVNSTIQISDSGIHPGSGVGNKRKELSKDTLGIPVIAIGVPTVVDAVTITSDTIDYMLKHFGREMRDDSPSRSLVPAGMSFGKRKVLTEEDLPDEEHRKSFLGIVGGLAEDEKRQLIHEVLAPLGHNLMVTPKEVDTFIDDMANVIANGLNTALHENVSQDNKGMYNH.

The propeptide occupies 1-16 (MEKKKLDLSQYAVRTD).

The protein belongs to the peptidase A25 family. As to quaternary structure, homotetramer. Autoproteolytically processed. The inactive tetrameric zymogen termed p46 autoprocesses to a smaller form termed p41, which is active only during spore germination.

The catalysed reaction is Endopeptidase action with P4 Glu or Asp, P1 preferably Glu &gt; Asp, P1' hydrophobic and P2' Ala.. Its function is as follows. Initiates the rapid degradation of small, acid-soluble proteins during spore germination. The chain is Germination protease from Bacillus licheniformis (strain ATCC 14580 / DSM 13 / JCM 2505 / CCUG 7422 / NBRC 12200 / NCIMB 9375 / NCTC 10341 / NRRL NRS-1264 / Gibson 46).